An 820-amino-acid polypeptide reads, in one-letter code: Serine/threonine-protein phosphatase 4 regulatory subunit 3B (820 aa).

The 100-residue stretch at 1–100 (MSDTRRRVKV…DEIWEKICQV (100 aa)) folds into the WH1 domain. Residues Ser117 and Ser663 each carry the phosphoserine modification. Residues 687 to 820 (EDDDEEGKAV…SPRKRPRLGS (134 aa)) form a disordered region. Positions 701–732 (EKSKTEDDFPDSYEKFMETKKAKESEDKENLP) are enriched in basic and acidic residues. The segment covering 744–789 (FSHSPSATNGTNSTNSKSVVSQTTPASSNVASSKTTSLATSVTATK) has biased composition (polar residues). The segment covering 798–809 (YPDDEEEDEEEE) has biased composition (acidic residues). Residue Ser811 is modified to Phosphoserine.

It belongs to the SMEK family. As to quaternary structure, serine/threonine-protein phosphatase 4 (PP4) occurs in different assemblies of the catalytic and one or more regulatory subunits. Component of the PP4 complex PPP4C-PPP4R2-PPP4R3B.

It is found in the cytoplasm. Its subcellular location is the cytoskeleton. The protein resides in the microtubule organizing center. It localises to the centrosome. The protein localises to the nucleus. Its function is as follows. Regulatory subunit of serine/threonine-protein phosphatase 4 (PP4). May regulate the activity of PPP4C at centrosomal microtubule organizing centers. The sequence is that of Serine/threonine-protein phosphatase 4 regulatory subunit 3B from Mus musculus (Mouse).